Here is a 416-residue protein sequence, read N- to C-terminus: Neurotensin receptor type 2 (416 aa).

Topologically, residues 1 to 32 (METSSPWPPRPSPSAGLSLEARLGVDTRLWAK) are extracellular. A helical membrane pass occupies residues 33-55 (VLFTALYSLIFAFGTAGNALSVH). The Cytoplasmic segment spans residues 56-64 (VVLKARAGR). The helical transmembrane segment at 65–87 (PGRLRYHVLSLALSALLLLLVSM) threads the bilayer. At 88–109 (PMELYNFVWSHYPWVFGDLGCR) the chain is on the extracellular side. A disulfide bond links C108 and C194. Residues 110–131 (GYYFVRELCAYATVLSVASLSA) form a helical membrane-spanning segment. Residues 132–154 (ERCLAVCQPLRARRLLTPRRTRR) lie on the Cytoplasmic side of the membrane. A helical transmembrane segment spans residues 155–176 (LLSLVWVASLGLALPMAVIMGQ). Residues 177–216 (KHEVESADGEPEPASRVCTVLVSRATLQVFIQVNVLVSFA) are Extracellular-facing. A helical transmembrane segment spans residues 217-237 (LPLALTAFLNGITVNHLMALY). At 238 to 297 (SQVPSASAQVSSIPSRLELLSEEGLLGFITWRKTLSLGVQASLVRHKDASQIRSLQHSAQ) the chain is on the cytoplasmic side. Residues 298–318 (VLRAIVAVYVICWLPYHARRL) traverse the membrane as a helical segment. Over 319–337 (MYCYIPDDGWTNELYDFYH) the chain is Extracellular. A helical membrane pass occupies residues 338–358 (YFYMVTNTLFYVSSAVTPILY). Residues 359-416 (NAVSSSFRKLFLESLGSLCGEQHSLVPLPQEAPESTTSTYSFRLWGSPRNPSLGEIQV) are Cytoplasmic-facing. Residue C377 is the site of S-palmitoyl cysteine attachment. S410 is subject to Phosphoserine.

It belongs to the G-protein coupled receptor 1 family. Neurotensin receptor subfamily. NTSR2 sub-subfamily. Abundant in cortex and hypothalamus, and lower levels seen in the heart and intestine.

Its subcellular location is the cell membrane. Its function is as follows. Receptor for the tridecapeptide neurotensin. It is associated with G proteins that activate a phosphatidylinositol-calcium second messenger system. The polypeptide is Neurotensin receptor type 2 (Ntsr2) (Rattus norvegicus (Rat)).